The primary structure comprises 58 residues: Small ribosomal subunit protein bS21 (58 aa).

Belongs to the bacterial ribosomal protein bS21 family.

This is Small ribosomal subunit protein bS21 from Synechococcus sp. (strain CC9605).